The following is a 692-amino-acid chain: Elongation factor G (692 aa).

Residues 9–284 (EKIRNIGIMA…AVVDYLPSPV (276 aa)) form the tr-type G domain. GTP-binding positions include 18 to 25 (AHIDAGKT), 82 to 86 (DTPGH), and 136 to 139 (NKMD).

Belongs to the TRAFAC class translation factor GTPase superfamily. Classic translation factor GTPase family. EF-G/EF-2 subfamily.

The protein resides in the cytoplasm. In terms of biological role, catalyzes the GTP-dependent ribosomal translocation step during translation elongation. During this step, the ribosome changes from the pre-translocational (PRE) to the post-translocational (POST) state as the newly formed A-site-bound peptidyl-tRNA and P-site-bound deacylated tRNA move to the P and E sites, respectively. Catalyzes the coordinated movement of the two tRNA molecules, the mRNA and conformational changes in the ribosome. The chain is Elongation factor G from Neorickettsia sennetsu (strain ATCC VR-367 / Miyayama) (Ehrlichia sennetsu).